Consider the following 42-residue polypeptide: Potassium channel toxin gamma-KTx 1.4 (42 aa).

4 cysteine pairs are disulfide-bonded: Cys-5-Cys-23, Cys-11-Cys-34, Cys-20-Cys-39, and Cys-24-Cys-41.

The protein belongs to the ergtoxin family. Gamma-KTx 1 subfamily. In terms of tissue distribution, expressed by the venom gland.

It is found in the secreted. Its function is as follows. Blocks Kv11/ERG potassium channels. The protein is Potassium channel toxin gamma-KTx 1.4 of Centruroides sculpturatus (Arizona bark scorpion).